A 156-amino-acid polypeptide reads, in one-letter code: Crossover junction endodeoxyribonuclease RuvC (156 aa).

Residues D7, E66, and D138 contribute to the active site. Positions 7, 66, and 138 each coordinate Mg(2+).

This sequence belongs to the RuvC family. As to quaternary structure, homodimer which binds Holliday junction (HJ) DNA. The HJ becomes 2-fold symmetrical on binding to RuvC with unstacked arms; it has a different conformation from HJ DNA in complex with RuvA. In the full resolvosome a probable DNA-RuvA(4)-RuvB(12)-RuvC(2) complex forms which resolves the HJ. The cofactor is Mg(2+).

It localises to the cytoplasm. It catalyses the reaction Endonucleolytic cleavage at a junction such as a reciprocal single-stranded crossover between two homologous DNA duplexes (Holliday junction).. The RuvA-RuvB-RuvC complex processes Holliday junction (HJ) DNA during genetic recombination and DNA repair. Endonuclease that resolves HJ intermediates. Cleaves cruciform DNA by making single-stranded nicks across the HJ at symmetrical positions within the homologous arms, yielding a 5'-phosphate and a 3'-hydroxyl group; requires a central core of homology in the junction. The consensus cleavage sequence is 5'-(A/T)TT(C/G)-3'. Cleavage occurs on the 3'-side of the TT dinucleotide at the point of strand exchange. HJ branch migration catalyzed by RuvA-RuvB allows RuvC to scan DNA until it finds its consensus sequence, where it cleaves and resolves the cruciform DNA. The protein is Crossover junction endodeoxyribonuclease RuvC of Ehrlichia canis (strain Jake).